Reading from the N-terminus, the 424-residue chain is Glutamate-1-semialdehyde 2,1-aminomutase (424 aa).

K268 carries the N6-(pyridoxal phosphate)lysine modification.

This sequence belongs to the class-III pyridoxal-phosphate-dependent aminotransferase family. HemL subfamily. It depends on pyridoxal 5'-phosphate as a cofactor.

It is found in the cytoplasm. It carries out the reaction (S)-4-amino-5-oxopentanoate = 5-aminolevulinate. Its pathway is porphyrin-containing compound metabolism; protoporphyrin-IX biosynthesis; 5-aminolevulinate from L-glutamyl-tRNA(Glu): step 2/2. This chain is Glutamate-1-semialdehyde 2,1-aminomutase, found in Methanosarcina acetivorans (strain ATCC 35395 / DSM 2834 / JCM 12185 / C2A).